A 305-amino-acid polypeptide reads, in one-letter code: D-alanine--D-alanine ligase (305 aa).

The region spanning 107-299 is the ATP-grasp domain; the sequence is KVIFASAGLK…FGELVLRILQ (193 aa). 134-185 provides a ligand contact to ATP; that stretch reads PLPVVVKPSREGSSVGVGIVRDPSRMQAALDEAFRYDSEILIEGFIDGREVQ. D253, E266, and N268 together coordinate Mg(2+).

It belongs to the D-alanine--D-alanine ligase family. The cofactor is Mg(2+). Requires Mn(2+) as cofactor.

It localises to the cytoplasm. It catalyses the reaction 2 D-alanine + ATP = D-alanyl-D-alanine + ADP + phosphate + H(+). It functions in the pathway cell wall biogenesis; peptidoglycan biosynthesis. Cell wall formation. This chain is D-alanine--D-alanine ligase, found in Citrifermentans bemidjiense (strain ATCC BAA-1014 / DSM 16622 / JCM 12645 / Bem) (Geobacter bemidjiensis).